Reading from the N-terminus, the 242-residue chain is Probable transcriptional regulatory protein XCV3282 (242 aa).

The protein belongs to the TACO1 family.

It is found in the cytoplasm. This Xanthomonas euvesicatoria pv. vesicatoria (strain 85-10) (Xanthomonas campestris pv. vesicatoria) protein is Probable transcriptional regulatory protein XCV3282.